The chain runs to 891 residues: Receptor-like protein 50 (891 aa).

Positions 1-22 (MITIIWSLCLIFCLSNSILVIA) are cleaved as a signal peptide. Topologically, residues 23–849 (KDLCLPDQRD…KEEKDKGLSW (827 aa)) are extracellular. 2 N-linked (GlcNAc...) asparagine glycosylation sites follow: Asn-62 and Asn-98. LRR repeat units follow at residues 105–130 (QHLQ…NFKY), 132–152 (RVLN…LRSL), 153–176 (SYLT…SMGN), 177–201 (LKHL…LGNL), 203–225 (YLTD…MGNL), 226–249 (KSLR…LGSL), and 250–272 (SNLT…SMSS). N-linked (GlcNAc...) asparagine glycosylation is present at Asn-200. N-linked (GlcNAc...) asparagine glycans are attached at residues Asn-251, Asn-285, and Asn-306. 4 LRR repeats span residues 286–309 (LSSL…NMSS), 310–334 (LSKL…LFML), 336–358 (SLIK…NISS), and 359–383 (PSNL…ILKL). N-linked (GlcNAc...) asparagine glycosylation is present at Asn-355. One copy of the LRR 12; degenerate repeat lies at 384 to 407 (VGLSALSLSFWDTGGIVDFSIFLQ). LRR repeat units lie at residues 408–436 (LKSL…MMHL), 438–453 (LSSC…LENQ), 454–477 (TSLY…LWRL), 478–504 (PTLR…IYSF), 506–519 (ASDN…PRAV), 520–544 (CEIG…EISN), 545–568 (KTLS…SLHG), 570–591 (LRSL…LINC), 593–614 (YLQF…WLKS), 615–641 (LPNL…SLSF), 642–665 (SKLR…YFVG), 712–736 (FEIY…IGIL), 737–760 (KELI…LSNL), 761–784 (SNLQ…LGEL), and 786–809 (FLAR…QIQS). 3 N-linked (GlcNAc...) asparagine glycosylation sites follow: Asn-422, Asn-442, and Asn-452. Residues Asn-531, Asn-544, Asn-554, Asn-590, and Asn-605 are each glycosylated (N-linked (GlcNAc...) asparagine). Residues Asn-743 and Asn-759 are each glycosylated (N-linked (GlcNAc...) asparagine). N-linked (GlcNAc...) asparagine glycosylation is found at Asn-791 and Asn-811. The helical transmembrane segment at 850-870 (VAAAIGYVPGLFCGLAIGHIL) threads the bilayer. Residues 871–891 (TSYKRDWFMRIFSCFSSPLKK) lie on the Cytoplasmic side of the membrane.

It belongs to the RLP family.

Its subcellular location is the cell membrane. This chain is Receptor-like protein 50, found in Arabidopsis thaliana (Mouse-ear cress).